The chain runs to 183 residues: tRNA-splicing endonuclease (183 aa).

Catalysis depends on residues tyrosine 120, histidine 128, and lysine 159.

Belongs to the tRNA-intron endonuclease family. Archaeal short subfamily. In terms of assembly, homotetramer; although the tetramer contains four active sites, only two participate in the cleavage. Therefore, it should be considered as a dimer of dimers.

The enzyme catalyses pretRNA = a 3'-half-tRNA molecule with a 5'-OH end + a 5'-half-tRNA molecule with a 2',3'-cyclic phosphate end + an intron with a 2',3'-cyclic phosphate and a 5'-hydroxyl terminus.. In terms of biological role, endonuclease that removes tRNA introns. Cleaves pre-tRNA at the 5'- and 3'-splice sites to release the intron. The products are an intron and two tRNA half-molecules bearing 2',3' cyclic phosphate and 5'-OH termini. Recognizes a pseudosymmetric substrate in which 2 bulged loops of 3 bases are separated by a stem of 4 bp. The polypeptide is tRNA-splicing endonuclease (Pyrobaculum aerophilum (strain ATCC 51768 / DSM 7523 / JCM 9630 / CIP 104966 / NBRC 100827 / IM2)).